We begin with the raw amino-acid sequence, 522 residues long: 5,6-dihydroxyindole-2-carboxylic acid oxidase (522 aa).

A signal peptide spans Met1–Ala21. Residues Gln22–Thr470 lie on the Lumenal, melanosome side of the membrane. 5 cysteine pairs are disulfide-bonded: Cys27–Cys38, Cys39–Cys59, Cys50–Cys89, Cys91–Cys100, and Cys103–Cys112. N-linked (GlcNAc...) asparagine glycans are attached at residues Asn164 and Asn171. Zn(2+)-binding residues include His182, His205, and His214. Disulfide bonds link Cys248-Cys251 and Cys280-Cys293. An N-linked (GlcNAc...) asparagine glycan is attached at Asn294. The Zn(2+) site is built by His367 and His371. Residue Asn375 is glycosylated (N-linked (GlcNAc...) asparagine). Residue His394 coordinates Zn(2+). A helical transmembrane segment spans residues Val471–Val491. At His492–Val522 the chain is on the cytoplasmic side.

Belongs to the tyrosinase family. Cu(2+) is required as a cofactor. Requires Zn(2+) as cofactor.

The protein localises to the melanosome membrane. It catalyses the reaction 2 5,6-dihydroxyindole-2-carboxylate + O2 = 2 indole-5,6-quinone-2-carboxylate + 2 H2O. The protein operates within pigment biosynthesis; melanin biosynthesis. Plays a role in melanin biosynthesis. Catalyzes the oxidation of 5,6-dihydroxyindole-2-carboxylic acid (DHICA) into indole-5,6-quinone-2-carboxylic acid. May regulate or influence the type of melanin synthesized. Also to a lower extent, capable of hydroxylating tyrosine and producing melanin. In Carassius auratus (Goldfish), this protein is 5,6-dihydroxyindole-2-carboxylic acid oxidase (tyrp1).